The following is a 561-amino-acid chain: NAD(P)H-quinone oxidoreductase chain 4 2 (561 aa).

The next 14 helical transmembrane spans lie at 6–26 (FPWLTTIVLLPLLAALLIPFI), 36–56 (WYGLGVGAIDFALMCYVFWKY), 87–107 (LSMPLVLLAGLVTTLSIFAAW), 115–135 (LFYFLMLVLYSAQIGVFVAQD), 136–156 (LMLLFIMWELELVPVYLLISI), 169–189 (FLLYTAAASIFILVAALGMAL), 210–230 (AFELLLYLGLLITFGVKLAVF), 244–264 (SAPVSMILAGVLLKMGGYGLI), 275–295 (HVYFAPVLAILGVVNIVYGGL), 312–332 (VAHMGFVLLGIASFTDLGISG), 333–353 (ALLQMISHGLIAAVLFFLAGV), 376–396 (IFALFTISAMASLALPGMSGF), 419–439 (VTVFLAAVGLILTPIYLLSML), and 490–510 (VAIAACFLVLIIGIGLYPKIA).

Belongs to the complex I subunit 4 family.

The protein localises to the cellular thylakoid membrane. The enzyme catalyses a plastoquinone + NADH + (n+1) H(+)(in) = a plastoquinol + NAD(+) + n H(+)(out). It catalyses the reaction a plastoquinone + NADPH + (n+1) H(+)(in) = a plastoquinol + NADP(+) + n H(+)(out). Its function is as follows. NDH-1 shuttles electrons from NAD(P)H, via FMN and iron-sulfur (Fe-S) centers, to quinones in the respiratory chain. The immediate electron acceptor for the enzyme in this species is believed to be plastoquinone. Couples the redox reaction to proton translocation (for every two electrons transferred, four hydrogen ions are translocated across the cytoplasmic membrane), and thus conserves the redox energy in a proton gradient. The protein is NAD(P)H-quinone oxidoreductase chain 4 2 of Trichodesmium erythraeum (strain IMS101).